Here is a 175-residue protein sequence, read N- to C-terminus: tRNA-acetylating toxin 3 (175 aa).

The acetyl-CoA site is built by L95, V97, G103, G105, G107, A108, D133, Q138, D141, and W142. Residue Y143 is part of the active site. 2 residues coordinate acetyl-CoA: G145 and F146.

Belongs to the acetyltransferase family. GNAT subfamily. In terms of assembly, homodimer (in absence of antitoxin); has a condensed and elongated form. Forms a complex with cognate antitoxin TacA3. Forms a 4:2 antitoxin:toxin complex with cognate antitoxin TacA3. Forms a 4:4 antitoxin:toxin complex with promoter DNA, where 2 TacT3 dimers bridge 2 TacA3 dimers. Only TacA3 contacts promoter DNA in the octomeric form. TacT3 may contact DNA in the hexameric form.

The catalysed reaction is glycyl-tRNA(Gly) + acetyl-CoA = N-acetylglycyl-tRNA(Gly) + CoA + H(+). In terms of biological role, toxic component of a type II toxin-antitoxin (TA) system. Acetylates tRNA and inhibits translation. Acetylates only Gly-tRNA on all 3 Gly-tRNA(Gly) isoacceptors in situ. In vitro acetylates mainly Ile/Leu and Gly. Overexpression during the lag phase of a tacA3-tacT3 deletion strain leads to a 150-fold increase in persister cells in the presence of cefotaxime and a non-growth state in the absence of antibiotic. Persister cell formation and the growth defect are neutralized by cognate antitoxin TacA3, but not by TacA1 or TacA2. Plays a role in persister cell formation. Its function is as follows. The TacA3-TacT3 complex both represses and derepresses expression of its own operon. The hexameric 4:2 TacA3-TacT3 complex binds promoter DNA and represses its transcription; both subunits are required. The octomeric 4:4 TacA3-TacT3 complex derepresses the operon. The shift from hexameric to octomeric complex probably alters DNA-binding, leading to dissociation from the operator DNA and derepression. This is tRNA-acetylating toxin 3 from Salmonella typhimurium (strain 14028s / SGSC 2262).